Reading from the N-terminus, the 228-residue chain is Cytidylate kinase (228 aa).

Gly-17 to Thr-25 contacts ATP.

It belongs to the cytidylate kinase family. Type 1 subfamily.

Its subcellular location is the cytoplasm. The enzyme catalyses CMP + ATP = CDP + ADP. It catalyses the reaction dCMP + ATP = dCDP + ADP. The protein is Cytidylate kinase of Paraburkholderia xenovorans (strain LB400).